A 209-amino-acid polypeptide reads, in one-letter code: Uracil phosphoribosyltransferase (209 aa).

Residues arginine 79, arginine 104, and 131-139 (DPMLATGNS) contribute to the 5-phospho-alpha-D-ribose 1-diphosphate site. Uracil-binding positions include isoleucine 194 and 199-201 (GDA). Residue aspartate 200 participates in 5-phospho-alpha-D-ribose 1-diphosphate binding.

Belongs to the UPRTase family. The cofactor is Mg(2+).

It carries out the reaction UMP + diphosphate = 5-phospho-alpha-D-ribose 1-diphosphate + uracil. It functions in the pathway pyrimidine metabolism; UMP biosynthesis via salvage pathway; UMP from uracil: step 1/1. Allosterically activated by GTP. Functionally, catalyzes the conversion of uracil and 5-phospho-alpha-D-ribose 1-diphosphate (PRPP) to UMP and diphosphate. The protein is Uracil phosphoribosyltransferase of Rhizobium rhizogenes (strain K84 / ATCC BAA-868) (Agrobacterium radiobacter).